The primary structure comprises 83 residues: U20-theraphotoxin-Cg1a 2 (83 aa).

The N-terminal stretch at 1–21 (MQVSVLITLAVLGVMFVWTSA) is a signal peptide. A propeptide spanning residues 22–47 (AELEERGSDQPAWLKSLERIFQSEER) is cleaved from the precursor. Disulfide bonds link Cys-49–Cys-63, Cys-56–Cys-68, and Cys-62–Cys-76.

Belongs to the neurotoxin 10 (Hwtx-1) family. 40 (Jztx-35) subfamily. In terms of tissue distribution, expressed by the venom gland.

Its subcellular location is the secreted. In terms of biological role, probable ion channel inhibitor. The polypeptide is U20-theraphotoxin-Cg1a 2 (Chilobrachys guangxiensis (Chinese earth tiger tarantula)).